The chain runs to 424 residues: Arginine ADP-riboxanase OspC4 (424 aa).

Positions 85, 86, 87, 91, 104, 114, 130, 148, 153, 173, and 268 each coordinate NAD(+). Glutamate 268 is an active-site residue. ANK repeat units follow at residues methionine 311–glutamine 340, asparagine 355–lysine 386, and serine 393–glutamine 422.

Belongs to the OspC family.

The protein localises to the secreted. The protein resides in the host cytoplasm. The enzyme catalyses L-arginyl-[protein] + NAD(+) = ADP-riboxanated L-argininyl-[protein] + nicotinamide + NH4(+) + H(+). Its function is as follows. ADP-riboxanase effector that mediates arginine ADP-riboxanation of host caspase CASP4/CASP11, thereby inhibiting pyroptosis. The chain is Arginine ADP-riboxanase OspC4 from Shigella flexneri.